Here is a 306-residue protein sequence, read N- to C-terminus: Pyridoxal 5'-phosphate synthase subunit PdxS (306 aa).

Position 36 (aspartate 36) interacts with D-ribose 5-phosphate. The active-site Schiff-base intermediate with D-ribose 5-phosphate is lysine 93. Glycine 165 contributes to the D-ribose 5-phosphate binding site. A D-glyceraldehyde 3-phosphate-binding site is contributed by arginine 177. D-ribose 5-phosphate is bound by residues glycine 226 and 247–248 (GS).

Belongs to the PdxS/SNZ family. As to quaternary structure, in the presence of PdxT, forms a dodecamer of heterodimers.

The enzyme catalyses aldehydo-D-ribose 5-phosphate + D-glyceraldehyde 3-phosphate + L-glutamine = pyridoxal 5'-phosphate + L-glutamate + phosphate + 3 H2O + H(+). The protein operates within cofactor biosynthesis; pyridoxal 5'-phosphate biosynthesis. Its function is as follows. Catalyzes the formation of pyridoxal 5'-phosphate from ribose 5-phosphate (RBP), glyceraldehyde 3-phosphate (G3P) and ammonia. The ammonia is provided by the PdxT subunit. Can also use ribulose 5-phosphate and dihydroxyacetone phosphate as substrates, resulting from enzyme-catalyzed isomerization of RBP and G3P, respectively. The protein is Pyridoxal 5'-phosphate synthase subunit PdxS of Nocardia farcinica (strain IFM 10152).